Consider the following 37-residue polypeptide: Large ribosomal subunit protein bL36 (37 aa).

The protein belongs to the bacterial ribosomal protein bL36 family.

The sequence is that of Large ribosomal subunit protein bL36 (rpmJ) from Geobacillus stearothermophilus (Bacillus stearothermophilus).